The sequence spans 426 residues: 3-phosphoshikimate 1-carboxyvinyltransferase (426 aa).

The 3-phosphoshikimate site is built by Lys22, Ser23, and Arg27. Lys22 contacts phosphoenolpyruvate. Phosphoenolpyruvate-binding residues include Gly96 and Arg124. Positions 170, 171, 172, 198, 314, 337, and 341 each coordinate 3-phosphoshikimate. Residue Gln172 participates in phosphoenolpyruvate binding. The Proton acceptor role is filled by Asp314. Arg345, Arg387, and Lys412 together coordinate phosphoenolpyruvate.

Belongs to the EPSP synthase family. Monomer.

The protein resides in the cytoplasm. The enzyme catalyses 3-phosphoshikimate + phosphoenolpyruvate = 5-O-(1-carboxyvinyl)-3-phosphoshikimate + phosphate. It participates in metabolic intermediate biosynthesis; chorismate biosynthesis; chorismate from D-erythrose 4-phosphate and phosphoenolpyruvate: step 6/7. Functionally, catalyzes the transfer of the enolpyruvyl moiety of phosphoenolpyruvate (PEP) to the 5-hydroxyl of shikimate-3-phosphate (S3P) to produce enolpyruvyl shikimate-3-phosphate and inorganic phosphate. This Shewanella loihica (strain ATCC BAA-1088 / PV-4) protein is 3-phosphoshikimate 1-carboxyvinyltransferase.